The primary structure comprises 693 residues: DNA ligase (693 aa).

NAD(+)-binding positions include 45–49 (DSEYD), 94–95 (SI), and glutamate 131. Residue lysine 133 is the N6-AMP-lysine intermediate of the active site. 4 residues coordinate NAD(+): arginine 154, glutamate 190, lysine 307, and lysine 331. Zn(2+) contacts are provided by cysteine 429, cysteine 432, cysteine 447, and cysteine 453. Residues 615-693 (ASSSKLEGKT…EEGLLSLLAE (79 aa)) form the BRCT domain.

It belongs to the NAD-dependent DNA ligase family. LigA subfamily. The cofactor is Mg(2+). It depends on Mn(2+) as a cofactor.

It catalyses the reaction NAD(+) + (deoxyribonucleotide)n-3'-hydroxyl + 5'-phospho-(deoxyribonucleotide)m = (deoxyribonucleotide)n+m + AMP + beta-nicotinamide D-nucleotide.. Its function is as follows. DNA ligase that catalyzes the formation of phosphodiester linkages between 5'-phosphoryl and 3'-hydroxyl groups in double-stranded DNA using NAD as a coenzyme and as the energy source for the reaction. It is essential for DNA replication and repair of damaged DNA. The polypeptide is DNA ligase (Methylobacillus flagellatus (strain ATCC 51484 / DSM 6875 / VKM B-1610 / KT)).